A 57-amino-acid chain; its full sequence is uncharacterized protein (57 aa).

This is an uncharacterized protein from Dictyostelium discoideum (Social amoeba).